The chain runs to 488 residues: Thiamine transporter 2 (488 aa).

Residues 1–8 (MDSSCRTP) lie on the Cytoplasmic side of the membrane. Residues 9–29 (PSNSWVYPTVILCLFGFFSMF) form a helical membrane-spanning segment. The Extracellular segment spans residues 30-54 (RPSEAFLIPFLSEPSKNLTSPEMTN). N-linked (GlcNAc...) asparagine glycosylation is present at Asn-46. A helical membrane pass occupies residues 55–75 (EILPVWTYSYLATLPPVFVLT). Residues 76–82 (DYLRYKP) are Cytoplasmic-facing. A helical membrane pass occupies residues 83–103 (VIMLHVVAFATSYLFLLFGQG). At 104 to 111 (VMLMQTAE) the chain is on the extracellular side. Residues 112–132 (FFFGVVSATEIAYFAYIYSMV) form a helical membrane-spanning segment. The Cytoplasmic portion of the chain corresponds to 133 to 145 (SPEHYQKVSSYCR). A helical membrane pass occupies residues 146–166 (SITLVAYTAGSVLAQLLVSLT). Over 167 to 172 (NLPYSS) the chain is Extracellular. Residues 173–193 (LFYISLACVSVAFFFSLFLPM) form a helical membrane-spanning segment. Topologically, residues 194 to 276 (PKKSMFFHAK…YSSKHLVYWS (83 aa)) are cytoplasmic. Residues 277 to 297 (LWWAFATAGYNQILNYVQVLW) traverse the membrane as a helical segment. The Extracellular segment spans residues 298-310 (EHKAPSQDSSIYN). Residues 311–331 (GAVEAIATFGGALASFSVGYL) traverse the membrane as a helical segment. Topologically, residues 332 to 335 (KVNW) are cytoplasmic. A helical membrane pass occupies residues 336 to 356 (DLLGELGLAVFSAVIAGSLFL). Residues 357-369 (MNYSRSIWVCYAG) are Extracellular-facing. Residue Asn-358 is glycosylated (N-linked (GlcNAc...) asparagine). The helical transmembrane segment at 370–390 (YLLVKSSYSFLITIAVFQIAV) threads the bilayer. Residues 391 to 399 (NLSLERYAL) are Cytoplasmic-facing. The chain crosses the membrane as a helical span at residues 400–420 (VFGIDTFIALVIQTIMTMIVV). Residues 421-428 (DQRGLQLP) are Extracellular-facing. Residues 429–449 (VTTQFLVYGSYFAVIAGVFLM) traverse the membrane as a helical segment. The Cytoplasmic portion of the chain corresponds to 450-488 (RSIYILCSAKCRKEVQNLATTRSPNEPHPQEPSNVSTKF). The disordered stretch occupies residues 469 to 488 (TTRSPNEPHPQEPSNVSTKF).

This sequence belongs to the reduced folate carrier (RFC) transporter (TC 2.A.48) family. High expression in kidney, brain, lung and small intestine. Detected in pancreatic acinar cells (at protein level). Also expressed strongly in pancreatic islet cells.

It localises to the membrane. The catalysed reaction is thiamine(out) + H(+)(in) = thiamine(in) + H(+)(out). Its function is as follows. High-affinity transporter for the intake of thiamine. Unlike the human ortholog, lacks H(+)-dependent pyridoxine transport activity due to an absence of seven critical amino-acids required for pyridoxine transport. The polypeptide is Thiamine transporter 2 (Slc19a3) (Mus musculus (Mouse)).